The sequence spans 434 residues: Asparagine--tRNA ligase (434 aa).

It belongs to the class-II aminoacyl-tRNA synthetase family.

It localises to the cytoplasm. The catalysed reaction is tRNA(Asn) + L-asparagine + ATP = L-asparaginyl-tRNA(Asn) + AMP + diphosphate + H(+). The sequence is that of Asparagine--tRNA ligase (asnS) from Pyrococcus furiosus (strain ATCC 43587 / DSM 3638 / JCM 8422 / Vc1).